The primary structure comprises 218 residues: Small ribosomal subunit protein uS3c (218 aa).

The region spanning 47-118 (VQKHMRISSG…RLNITITRIA (72 aa)) is the KH type-2 domain.

This sequence belongs to the universal ribosomal protein uS3 family. Part of the 30S ribosomal subunit.

It is found in the plastid. The protein localises to the chloroplast. The sequence is that of Small ribosomal subunit protein uS3c (rps3) from Amborella trichopoda.